We begin with the raw amino-acid sequence, 139 residues long: ATP synthase epsilon chain (139 aa).

The protein belongs to the ATPase epsilon chain family. In terms of assembly, F-type ATPases have 2 components, CF(1) - the catalytic core - and CF(0) - the membrane proton channel. CF(1) has five subunits: alpha(3), beta(3), gamma(1), delta(1), epsilon(1). CF(0) has three main subunits: a, b and c.

The protein resides in the cell inner membrane. Functionally, produces ATP from ADP in the presence of a proton gradient across the membrane. The sequence is that of ATP synthase epsilon chain from Acinetobacter baylyi (strain ATCC 33305 / BD413 / ADP1).